A 612-amino-acid chain; its full sequence is MPAYRSRTTTHGRNMAGARGLWRATGMKDSDFGKPIIAVVNSFTQFVPGHVHLKDLGQLVAREIEAAGGVAKEFNTIAVDDGIAMGHDGMLYSLPSRELIADSVEYMVNAHCADAMVCISNCDKITPGMLMASLRLNIPTVFVSGGPMEAGKVVLHGKQHALDLVDAMVAAADDKISDEDVKVIERSACPTCGSCSGMFTANSMNCLTEALGLSLPGNGSTLATHADRKRLFVEAGHLIVDLARRYYEQDDVKALPRTIASKQAFENAMALDIAMGGSTNTVLHILAAAHEGEVDFTMADIDALSRRVPCLSKVAPAKSDVHMEDVHRAGGIMSILGELDKGGLLNRDCPTVHAETLGDAIDRWDITRTTSDTVRDFYRAAPGGIPTQVAFSQEARWDELDTDRQNGVIRSVEHPFSKDGGLAVLKGNLAVDGCIVKTAGVDESILKFSGPARVFESQDASVKAILANEIKAGDVVVIRYEGPKGGPGMQEMLYPTSYLKSKGLGKACALITDGRFSGGTSGLSIGHVSPEAANGGTIGLVREGDIIDIDIPNRTISLRVGEAELAARRAEQDARGWRPTEVRKRNVTTALKAYAAFATSADRGAVRDLDAR.

Aspartate 81 contributes to the Mg(2+) binding site. Cysteine 122 contributes to the [2Fe-2S] cluster binding site. Mg(2+) contacts are provided by aspartate 123 and lysine 124. Residue lysine 124 is modified to N6-carboxylysine. Cysteine 195 lines the [2Fe-2S] cluster pocket. Glutamate 491 serves as a coordination point for Mg(2+). Catalysis depends on serine 517, which acts as the Proton acceptor.

It belongs to the IlvD/Edd family. As to quaternary structure, homodimer. The cofactor is [2Fe-2S] cluster. Mg(2+) is required as a cofactor.

It carries out the reaction (2R)-2,3-dihydroxy-3-methylbutanoate = 3-methyl-2-oxobutanoate + H2O. The enzyme catalyses (2R,3R)-2,3-dihydroxy-3-methylpentanoate = (S)-3-methyl-2-oxopentanoate + H2O. Its pathway is amino-acid biosynthesis; L-isoleucine biosynthesis; L-isoleucine from 2-oxobutanoate: step 3/4. The protein operates within amino-acid biosynthesis; L-valine biosynthesis; L-valine from pyruvate: step 3/4. Its function is as follows. Functions in the biosynthesis of branched-chain amino acids. Catalyzes the dehydration of (2R,3R)-2,3-dihydroxy-3-methylpentanoate (2,3-dihydroxy-3-methylvalerate) into 2-oxo-3-methylpentanoate (2-oxo-3-methylvalerate) and of (2R)-2,3-dihydroxy-3-methylbutanoate (2,3-dihydroxyisovalerate) into 2-oxo-3-methylbutanoate (2-oxoisovalerate), the penultimate precursor to L-isoleucine and L-valine, respectively. This chain is Dihydroxy-acid dehydratase, found in Rhizobium etli (strain ATCC 51251 / DSM 11541 / JCM 21823 / NBRC 15573 / CFN 42).